Here is a 359-residue protein sequence, read N- to C-terminus: DNA polymerase IV (359 aa).

In terms of domain architecture, UmuC spans I7–G188. Mg(2+) is bound by residues D11 and D106. E107 is an active-site residue.

It belongs to the DNA polymerase type-Y family. In terms of assembly, monomer. Mg(2+) serves as cofactor.

Its subcellular location is the cytoplasm. It catalyses the reaction DNA(n) + a 2'-deoxyribonucleoside 5'-triphosphate = DNA(n+1) + diphosphate. In terms of biological role, poorly processive, error-prone DNA polymerase involved in untargeted mutagenesis. Copies undamaged DNA at stalled replication forks, which arise in vivo from mismatched or misaligned primer ends. These misaligned primers can be extended by PolIV. Exhibits no 3'-5' exonuclease (proofreading) activity. May be involved in translesional synthesis, in conjunction with the beta clamp from PolIII. This Clostridium perfringens (strain SM101 / Type A) protein is DNA polymerase IV.